The primary structure comprises 255 residues: NAD-dependent protein deacylase (255 aa).

The region spanning 1-253 is the Deacetylase sirtuin-type domain; sequence MEFSDELLAS…PLLLQALRRS (253 aa). 22–42 provides a ligand contact to NAD(+); the sequence is GAGVSAESGIPTFRDALTGFW. Tyrosine 67 and arginine 70 together coordinate substrate. 101–104 contacts NAD(+); sequence QNVD. The Proton acceptor role is filled by histidine 119. Cysteine 127, cysteine 130, cysteine 155, and cysteine 158 together coordinate Zn(2+). Residues 195–197, 221–223, and alanine 239 each bind NAD(+); these read GTS and NPA.

Belongs to the sirtuin family. Class III subfamily. Requires Zn(2+) as cofactor.

The protein resides in the cytoplasm. The enzyme catalyses N(6)-acetyl-L-lysyl-[protein] + NAD(+) + H2O = 2''-O-acetyl-ADP-D-ribose + nicotinamide + L-lysyl-[protein]. The catalysed reaction is N(6)-succinyl-L-lysyl-[protein] + NAD(+) + H2O = 2''-O-succinyl-ADP-D-ribose + nicotinamide + L-lysyl-[protein]. NAD-dependent lysine deacetylase and desuccinylase that specifically removes acetyl and succinyl groups on target proteins. Modulates the activities of several proteins which are inactive in their acylated form. This is NAD-dependent protein deacylase from Methylococcus capsulatus (strain ATCC 33009 / NCIMB 11132 / Bath).